The primary structure comprises 490 residues: WD repeat-containing protein JIP5 (490 aa).

WD repeat units follow at residues 23 to 64 (KYND…ERMQ), 70 to 112 (QKKK…GSCR), 118 to 155 (PIES…ISKD), 157 to 196 (SSKD…NKFK), 242 to 284 (DQED…LMDQ), 286 to 327 (SRIK…HRVN), and 340 to 377 (GTAD…EEEE). A disordered region spans residues 368 to 490 (SAEGDDEEEE…SHGIRRFDGL (123 aa)). Composition is skewed to acidic residues over residues 370–406 (EGDD…EGDD) and 413–437 (EESD…EEST). The span at 438–448 (ETDHKNIEAES) shows a compositional bias: basic and acidic residues. Over residues 450–461 (KQANKRQASQPK) the composition is skewed to polar residues. A compositionally biased stretch (basic residues) spans 469–484 (KQKLKQTSKLAHSHGI).

This sequence belongs to the WD repeat WDR55 family.

It localises to the nucleus. Its subcellular location is the nucleolus. The protein is WD repeat-containing protein JIP5 (JIP5) of Meyerozyma guilliermondii (strain ATCC 6260 / CBS 566 / DSM 6381 / JCM 1539 / NBRC 10279 / NRRL Y-324) (Yeast).